We begin with the raw amino-acid sequence, 242 residues long: Protein CDV3 homolog B (242 aa).

Residues Met1–Lys15 are compositionally biased toward basic and acidic residues. Residues Met1–Gln242 are disordered. An N-acetylalanine modification is found at Ala2. Low complexity predominate over residues Ala30–Lys57. A compositionally biased stretch (basic and acidic residues) spans Val59 to Glu75. The segment covering Lys105–Glu122 has biased composition (acidic residues). Polar residues-rich tracts occupy residues Asp129–Ala143 and Ser183–Ala194. Residues Lys195–Lys213 show a composition bias toward basic and acidic residues.

This sequence belongs to the CDV3 family.

Its subcellular location is the cytoplasm. The polypeptide is Protein CDV3 homolog B (cdv3-b) (Xenopus laevis (African clawed frog)).